A 574-amino-acid chain; its full sequence is Dihydroxy-acid dehydratase 2 (574 aa).

Residues 1–20 (MNAKTNIKQRLPSRHVTEGP) are disordered. A [2Fe-2S] cluster-binding site is contributed by C56. D88 lines the Mg(2+) pocket. C129 is a [2Fe-2S] cluster binding site. Residues D130 and K131 each coordinate Mg(2+). K131 bears the N6-carboxylysine mark. C201 lines the [2Fe-2S] cluster pocket. E451 is a Mg(2+) binding site. The Proton acceptor role is filled by S477.

The protein belongs to the IlvD/Edd family. In terms of assembly, homodimer. The cofactor is [2Fe-2S] cluster. Mg(2+) is required as a cofactor.

It carries out the reaction (2R)-2,3-dihydroxy-3-methylbutanoate = 3-methyl-2-oxobutanoate + H2O. The catalysed reaction is (2R,3R)-2,3-dihydroxy-3-methylpentanoate = (S)-3-methyl-2-oxopentanoate + H2O. It functions in the pathway amino-acid biosynthesis; L-isoleucine biosynthesis; L-isoleucine from 2-oxobutanoate: step 3/4. Its pathway is amino-acid biosynthesis; L-valine biosynthesis; L-valine from pyruvate: step 3/4. Functions in the biosynthesis of branched-chain amino acids. Catalyzes the dehydration of (2R,3R)-2,3-dihydroxy-3-methylpentanoate (2,3-dihydroxy-3-methylvalerate) into 2-oxo-3-methylpentanoate (2-oxo-3-methylvalerate) and of (2R)-2,3-dihydroxy-3-methylbutanoate (2,3-dihydroxyisovalerate) into 2-oxo-3-methylbutanoate (2-oxoisovalerate), the penultimate precursor to L-isoleucine and L-valine, respectively. This Bradyrhizobium diazoefficiens (strain JCM 10833 / BCRC 13528 / IAM 13628 / NBRC 14792 / USDA 110) protein is Dihydroxy-acid dehydratase 2.